We begin with the raw amino-acid sequence, 694 residues long: Elongation factor G 2 (694 aa).

One can recognise a tr-type G domain in the interval 8–282; sequence TAIRNIGIMA…AVVSYLPSPL (275 aa). GTP is bound by residues 17 to 24, 81 to 85, and 135 to 138; these read AHIDAGKT, DTPGH, and NKMD.

Belongs to the TRAFAC class translation factor GTPase superfamily. Classic translation factor GTPase family. EF-G/EF-2 subfamily.

It localises to the cytoplasm. In terms of biological role, catalyzes the GTP-dependent ribosomal translocation step during translation elongation. During this step, the ribosome changes from the pre-translocational (PRE) to the post-translocational (POST) state as the newly formed A-site-bound peptidyl-tRNA and P-site-bound deacylated tRNA move to the P and E sites, respectively. Catalyzes the coordinated movement of the two tRNA molecules, the mRNA and conformational changes in the ribosome. This Syntrophomonas wolfei subsp. wolfei (strain DSM 2245B / Goettingen) protein is Elongation factor G 2.